Here is a 354-residue protein sequence, read N- to C-terminus: Squamosa promoter-binding-like protein 15 (354 aa).

The disordered stretch occupies residues 1 to 25 (MELLMCSGQAESGGSSSTESSSLSG). Positions 7-25 (SGQAESGGSSSTESSSLSG) are enriched in low complexity. The segment at 56 to 133 (TARCQVEGCR…ACHNERRRKP (78 aa)) adopts an SBP-type zinc-finger fold. 8 residues coordinate Zn(2+): Cys-59, Cys-64, Cys-81, His-84, Cys-100, Cys-103, His-107, and Cys-119. The short motif at 116-132 (KRSCRRRLACHNERRRK) is the Bipartite nuclear localization signal element.

It depends on Zn(2+) as a cofactor.

It is found in the nucleus. Functionally, trans-acting factor that binds specifically to the consensus nucleotide sequence 5'-TNCGTACAA-3'. This chain is Squamosa promoter-binding-like protein 15 (SPL15), found in Arabidopsis thaliana (Mouse-ear cress).